We begin with the raw amino-acid sequence, 932 residues long: DNA mismatch repair protein MutS (932 aa).

The segment covering 1–13 (MTTDTDTDVDAGT) has biased composition (acidic residues). The tract at residues 1 to 26 (MTTDTDTDVDAGTDLEPQPEGPPEKM) is disordered. 648 to 655 (GPNMSGKS) is a binding site for ATP. Positions 865–892 (NQQNQASDDDEIARSPRGADTNTDAGIN) are disordered.

Belongs to the DNA mismatch repair MutS family.

Its function is as follows. This protein is involved in the repair of mismatches in DNA. It is possible that it carries out the mismatch recognition step. This protein has a weak ATPase activity. In Haloquadratum walsbyi (strain DSM 16790 / HBSQ001), this protein is DNA mismatch repair protein MutS.